The sequence spans 155 residues: Effector protein PevD1 (155 aa).

A signal peptide spans 1 to 18; it reads MQFTLAAAAALFGASALA. One can recognise an AA1-like domain in the interval 33-148; that stretch reads NMYENIDIAD…NPTTIVIDSL (116 aa). 2 disulfides stabilise this stretch: Cys-70–Cys-84 and Cys-125–Cys-135.

In terms of assembly, monomer. Interacts with Arabidopsis thaliana NRP.

It localises to the secreted. Functionally, effector protein. Elicits a hypersensitive response (HR) in tobacco plants (N.tabacum) and cotton (G.hirsutum). Boosts systemic acquired resistance (SAR) to tobacco mosaic virus (TMV) infection in N.tabacum and to V.dhaliae infection in primed cotton seedlings. The polypeptide is Effector protein PevD1 (Verticillium dahliae (Verticillium wilt)).